The chain runs to 107 residues: U1-lycotoxin-Ls1b (107 aa).

The first 20 residues, 1-20 (MMKVLVVVALLVTLISYSSS), serve as a signal peptide directing secretion. The propeptide occupies 21–41 (EGIDDLEADELLSLMANEQTR). 4 disulfide bridges follow: cysteine 44/cysteine 59, cysteine 51/cysteine 68, cysteine 58/cysteine 86, and cysteine 70/cysteine 84.

Belongs to the neurotoxin 19 (CSTX) family. 04 (U1-Lctx) subfamily. Expressed by the venom gland.

The protein resides in the secreted. The sequence is that of U1-lycotoxin-Ls1b from Lycosa singoriensis (Wolf spider).